Consider the following 884-residue polypeptide: Valine--tRNA ligase (884 aa).

Residues 47–57 (PNVTGALHIGH) carry the 'HIGH' region motif. The 'KMSKS' region motif lies at 525–529 (KMSKS). Lys528 is a binding site for ATP. A coiled-coil region spans residues 812–884 (AVDFEAELAR…QQRFRDAIGK (73 aa)).

It belongs to the class-I aminoacyl-tRNA synthetase family. ValS type 1 subfamily. In terms of assembly, monomer.

The protein localises to the cytoplasm. It carries out the reaction tRNA(Val) + L-valine + ATP = L-valyl-tRNA(Val) + AMP + diphosphate. Catalyzes the attachment of valine to tRNA(Val). As ValRS can inadvertently accommodate and process structurally similar amino acids such as threonine, to avoid such errors, it has a 'posttransfer' editing activity that hydrolyzes mischarged Thr-tRNA(Val) in a tRNA-dependent manner. The sequence is that of Valine--tRNA ligase from Nitratidesulfovibrio vulgaris (strain ATCC 29579 / DSM 644 / CCUG 34227 / NCIMB 8303 / VKM B-1760 / Hildenborough) (Desulfovibrio vulgaris).